Reading from the N-terminus, the 434-residue chain is UDP-N-acetylmuramate--L-alanine ligase (434 aa).

110 to 116 (GAHGKTS) is an ATP binding site.

Belongs to the MurCDEF family.

It is found in the cytoplasm. It catalyses the reaction UDP-N-acetyl-alpha-D-muramate + L-alanine + ATP = UDP-N-acetyl-alpha-D-muramoyl-L-alanine + ADP + phosphate + H(+). Its pathway is cell wall biogenesis; peptidoglycan biosynthesis. Functionally, cell wall formation. This Limosilactobacillus reuteri (strain DSM 20016) (Lactobacillus reuteri) protein is UDP-N-acetylmuramate--L-alanine ligase.